The sequence spans 240 residues: Putative exosome complex component RRP41 (240 aa).

This sequence belongs to the RNase PH family. As to quaternary structure, component of the RNA exosome complex.

It is found in the cytoplasm. It localises to the nucleus. The protein localises to the nucleolus. The protein resides in the nucleoplasm. Its function is as follows. Non-catalytic component of the RNA exosome complex which has 3'-&gt;5' exoribonuclease activity and participates in a multitude of cellular RNA processing and degradation events. This Caenorhabditis elegans protein is Putative exosome complex component RRP41 (exos-4.1).